The following is a 674-amino-acid chain: Probable L-type lectin-domain containing receptor kinase I.5 (674 aa).

The first 22 residues, 1 to 22 (MSKGLFLIWLISSFHLISFSTS), serve as a signal peptide directing secretion. The Extracellular segment spans residues 23–286 (SKDTSFVFNG…RPRAEHKKVQ (264 aa)). Positions 25–258 (DTSFVFNGFG…YHYLLGWSFS (234 aa)) are legume-lectin like. N-linked (GlcNAc...) asparagine glycans are attached at residues Asn-124, Asn-181, Asn-185, Asn-204, and Asn-225. Residues 287-307 (FALIIALPVILAIVVMAVLAG) form a helical membrane-spanning segment. The Cytoplasmic segment spans residues 308–674 (VYYHRKKKYA…DHEQPLEFKS (367 aa)). The region spanning 344-625 (FHKDRFLGRG…LPLPDFSPYT (282 aa)) is the Protein kinase domain. ATP-binding positions include 350-358 (LGRGGFGEV) and Lys-372. The active-site Proton acceptor is the Asp-468. Over residues 649–662 (NWSAPSASSSSANN) the composition is skewed to low complexity. Positions 649 to 674 (NWSAPSASSSSANNSKDHEQPLEFKS) are disordered. Positions 663 to 674 (SKDHEQPLEFKS) are enriched in basic and acidic residues.

The protein in the C-terminal section; belongs to the protein kinase superfamily. Ser/Thr protein kinase family. This sequence in the N-terminal section; belongs to the leguminous lectin family.

Its subcellular location is the cell membrane. It catalyses the reaction L-seryl-[protein] + ATP = O-phospho-L-seryl-[protein] + ADP + H(+). The enzyme catalyses L-threonyl-[protein] + ATP = O-phospho-L-threonyl-[protein] + ADP + H(+). This Arabidopsis thaliana (Mouse-ear cress) protein is Probable L-type lectin-domain containing receptor kinase I.5 (LECRK15).